Reading from the N-terminus, the 377-residue chain is Flagellin C (377 aa).

Coiled-coil stretches lie at residues 103–129 and 301–340; these read SNSK…VAET and VDSH…KDTD.

It belongs to the bacterial flagellin family. Heteromer of multiple flagellin subunits including FlaA, FlaB, FlaC, FlaD and FlaE.

Its subcellular location is the secreted. It is found in the bacterial flagellum. Flagellin is the subunit protein which polymerizes to form the filaments of bacterial flagella. FlaC is not essential for flagellar synthesis and motility. The polypeptide is Flagellin C (flaC) (Vibrio cholerae serotype O1 (strain ATCC 39541 / Classical Ogawa 395 / O395)).